We begin with the raw amino-acid sequence, 95 residues long: Toxin Tbo-IT2 (95 aa).

Residues 1–23 (MTMKTLCLSLIVIGVLILVAVKA) form the signal peptide. Residues 24–53 (EDYVNINSLEEAPEENVNINNLEETPEESR) constitute a propeptide that is removed on maturation. 5 cysteine pairs are disulfide-bonded: cysteine 54-cysteine 68, cysteine 61-cysteine 73, cysteine 67-cysteine 84, cysteine 70-cysteine 92, and cysteine 75-cysteine 82. Cysteine 92 is subject to Cysteine amide.

The protein belongs to the neurotoxin 02 (plectoxin) family. 02 (plectoxin) subfamily. In terms of tissue distribution, expressed by the venom gland.

The protein localises to the secreted. Its function is as follows. This recombinant (non-amidated) toxin shows insecticidal activity on larvae of the housefly Musca domestica and has no activity on a panel of expressed neuronal receptors and ion channels. The protein is Toxin Tbo-IT2 of Tibellus oblongus (Oblong running crab spider).